The following is a 130-amino-acid chain: Small ribosomal subunit protein uS8 (130 aa).

Belongs to the universal ribosomal protein uS8 family. Part of the 30S ribosomal subunit.

Its function is as follows. One of the primary rRNA binding proteins, it binds directly to 16S rRNA central domain where it helps coordinate assembly of the platform of the 30S subunit. The chain is Small ribosomal subunit protein uS8 from Thermococcus sibiricus (strain DSM 12597 / MM 739).